The following is a 347-amino-acid chain: UPF0284 protein SSO2213 (347 aa).

Belongs to the UPF0284 family.

This is UPF0284 protein SSO2213 from Saccharolobus solfataricus (strain ATCC 35092 / DSM 1617 / JCM 11322 / P2) (Sulfolobus solfataricus).